The primary structure comprises 393 residues: Formate-dependent phosphoribosylglycinamide formyltransferase (393 aa).

Residues 22–23 (EL) and Glu82 each bind N(1)-(5-phospho-beta-D-ribosyl)glycinamide. ATP-binding positions include Arg114, Lys155, 160-165 (SSGKGQ), 195-198 (EGLV), and Glu203. The 190-residue stretch at 119–308 (RLAAETLQLP…EFALHVRAFL (190 aa)) folds into the ATP-grasp domain. Glu267 and Glu279 together coordinate Mg(2+). N(1)-(5-phospho-beta-D-ribosyl)glycinamide-binding positions include Asp286, Lys355, and 362-363 (RR).

Belongs to the PurK/PurT family. In terms of assembly, homodimer.

The catalysed reaction is N(1)-(5-phospho-beta-D-ribosyl)glycinamide + formate + ATP = N(2)-formyl-N(1)-(5-phospho-beta-D-ribosyl)glycinamide + ADP + phosphate + H(+). It functions in the pathway purine metabolism; IMP biosynthesis via de novo pathway; N(2)-formyl-N(1)-(5-phospho-D-ribosyl)glycinamide from N(1)-(5-phospho-D-ribosyl)glycinamide (formate route): step 1/1. Functionally, involved in the de novo purine biosynthesis. Catalyzes the transfer of formate to 5-phospho-ribosyl-glycinamide (GAR), producing 5-phospho-ribosyl-N-formylglycinamide (FGAR). Formate is provided by PurU via hydrolysis of 10-formyl-tetrahydrofolate. The sequence is that of Formate-dependent phosphoribosylglycinamide formyltransferase from Yersinia pseudotuberculosis serotype IB (strain PB1/+).